A 205-amino-acid polypeptide reads, in one-letter code: UPF0056 membrane protein MJ1677 (205 aa).

The next 6 helical transmembrane spans lie at 7–27 (ILAFSSIFSILNPFGAVPVFI), 49–69 (ALAILLAFALFGEWILKFFGI), 70–90 (SLDAFKIAGGILLLLISLDMV), 112–132 (IALMPLATPLLAGPGSITACM), 145–165 (FLVILAILLSLGITYLTLLSA), and 185–205 (GLILTAIAVQMIVNGIRGALL).

This sequence belongs to the UPF0056 (MarC) family.

It localises to the cell membrane. This Methanocaldococcus jannaschii (strain ATCC 43067 / DSM 2661 / JAL-1 / JCM 10045 / NBRC 100440) (Methanococcus jannaschii) protein is UPF0056 membrane protein MJ1677.